Consider the following 213-residue polypeptide: MEHEFWQKKWASNVIGFHLPDTNPILTQYWSALEPKRNETVFVPLCGKSMDLDWLAERHNSVTGVELSQIAVRAFFAERLYTPTVTQLSSTLELYEFDEFTIYSGDYFVAPIEAADLIYDRAALVALPKEMREEYVQVLRSRLKEGGRILLVTLDYDQNEMAGPPFSVPENEVQALFSGMKITRLQRDEADAEHPKIKKGLSRFAEEVWLIES.

S-adenosyl-L-methionine-binding residues include W10, L45, E66, and R121.

Belongs to the class I-like SAM-binding methyltransferase superfamily. TPMT family.

It localises to the cytoplasm. The catalysed reaction is S-adenosyl-L-methionine + a thiopurine = S-adenosyl-L-homocysteine + a thiopurine S-methylether.. The chain is Thiopurine S-methyltransferase from Aliivibrio fischeri (strain ATCC 700601 / ES114) (Vibrio fischeri).